A 361-amino-acid polypeptide reads, in one-letter code: Phosphoserine aminotransferase (361 aa).

L-glutamate is bound at residue arginine 43. Pyridoxal 5'-phosphate is bound by residues 77 to 78 (AS), tryptophan 103, threonine 153, aspartate 173, and glutamine 196. At lysine 197 the chain carries N6-(pyridoxal phosphate)lysine. 238–239 (NT) serves as a coordination point for pyridoxal 5'-phosphate.

It belongs to the class-V pyridoxal-phosphate-dependent aminotransferase family. SerC subfamily. As to quaternary structure, homodimer. The cofactor is pyridoxal 5'-phosphate.

The protein resides in the cytoplasm. It catalyses the reaction O-phospho-L-serine + 2-oxoglutarate = 3-phosphooxypyruvate + L-glutamate. It carries out the reaction 4-(phosphooxy)-L-threonine + 2-oxoglutarate = (R)-3-hydroxy-2-oxo-4-phosphooxybutanoate + L-glutamate. It functions in the pathway amino-acid biosynthesis; L-serine biosynthesis; L-serine from 3-phospho-D-glycerate: step 2/3. It participates in cofactor biosynthesis; pyridoxine 5'-phosphate biosynthesis; pyridoxine 5'-phosphate from D-erythrose 4-phosphate: step 3/5. Catalyzes the reversible conversion of 3-phosphohydroxypyruvate to phosphoserine and of 3-hydroxy-2-oxo-4-phosphonooxybutanoate to phosphohydroxythreonine. This chain is Phosphoserine aminotransferase, found in Pseudomonas paraeruginosa (strain DSM 24068 / PA7) (Pseudomonas aeruginosa (strain PA7)).